The following is a 182-amino-acid chain: Adenine phosphoribosyltransferase (182 aa).

It belongs to the purine/pyrimidine phosphoribosyltransferase family. Homodimer.

Its subcellular location is the cytoplasm. It carries out the reaction AMP + diphosphate = 5-phospho-alpha-D-ribose 1-diphosphate + adenine. It participates in purine metabolism; AMP biosynthesis via salvage pathway; AMP from adenine: step 1/1. In terms of biological role, catalyzes a salvage reaction resulting in the formation of AMP, that is energically less costly than de novo synthesis. The chain is Adenine phosphoribosyltransferase from Pseudomonas syringae pv. tomato (strain ATCC BAA-871 / DC3000).